The following is a 69-amino-acid chain: uncharacterized protein (69 aa).

2 consecutive transmembrane segments (helical) span residues 15 to 35 and 36 to 56; these read LIIG…ICYV and LYII…IPKT.

The protein resides in the cell membrane. This is an uncharacterized protein from Methanocaldococcus jannaschii (strain ATCC 43067 / DSM 2661 / JAL-1 / JCM 10045 / NBRC 100440) (Methanococcus jannaschii).